Consider the following 409-residue polypeptide: Immediate early response gene 5-like protein (409 aa).

2 disordered regions span residues 168–237 (QPPH…PSSS) and 312–335 (GQEEEDDEEEDAGDLGAEPPGGTP). Positions 184 to 195 (QPGPAPLPPPAP) are enriched in pro residues. Low complexity-rich tracts occupy residues 196 to 212 (AALCPRDPRVPAACSAP) and 220 to 237 (PPTVAASSPPASPAPSSS). Over residues 313–324 (QEEEDDEEEDAG) the composition is skewed to acidic residues.

This sequence belongs to the IER family.

This chain is Immediate early response gene 5-like protein (Ier5l), found in Rattus norvegicus (Rat).